A 679-amino-acid chain; its full sequence is Pollen receptor-like kinase 4 (679 aa).

Positions 1-39 are cleaved as a signal peptide; it reads MLTWETPVMLASNTASTKKLAFITTFLIIVLCPVTMVMS. 5 LRR repeats span residues 118-141, 142-165, 167-191, 193-217, and 234-257; these read IKNLRTLSFMNNKFNGSMPSVKNF, GALKSLYLSNNRFTGEIPADAFDG, HHLKKLLLANNAFRGSIPSSLAYLP, LLELRLNGNQFHGEIPYFKQKDLKL, and SNMDPVSFSGNKNLCGPPLSPCSS. The segment covering 252-269 has biased composition (low complexity); that stretch reads LSPCSSDSGSSPDLPSSP. Residues 252 to 271 form a disordered region; it reads LSPCSSDSGSSPDLPSSPTE. A helical membrane pass occupies residues 278 to 298; sequence FFIIAIVLIVIGIILMIISLV. Residues 311 to 344 are disordered; that stretch reads SAYPSAGQDRTEKYNYDQSTDKDKAADSVTSYTS. Residues 319–336 show a composition bias toward basic and acidic residues; the sequence is DRTEKYNYDQSTDKDKAA. The 275-residue stretch at 372 to 646 folds into the Protein kinase domain; sequence RASAEVLGSG…RDAVEKIERL (275 aa). At Ser-374 the chain carries Phosphoserine. Residues 378-386 and Lys-400 each bind ATP; that span reads LGSGSFGSS. Residues Ser-452 and Ser-455 each carry the phosphoserine modification. At Thr-472 the chain carries Phosphothreonine. Tyr-542 is subject to Phosphotyrosine.

Belongs to the protein kinase superfamily. Ser/Thr protein kinase family. Interacts in vitro with ROPGEF1 (via PRONE domain). Interacts weakly with the GRI peptide. As to expression, expressed in pollen and/or in flowers, but not in leaves.

It localises to the membrane. It carries out the reaction L-seryl-[protein] + ATP = O-phospho-L-seryl-[protein] + ADP + H(+). The catalysed reaction is L-threonyl-[protein] + ATP = O-phospho-L-threonyl-[protein] + ADP + H(+). In terms of biological role, receptor-like kinase involved in the control of pollen germination and pollen tube polar growth. Can phosphorylate ROPGEF1 in vitro. The polypeptide is Pollen receptor-like kinase 4 (Arabidopsis thaliana (Mouse-ear cress)).